We begin with the raw amino-acid sequence, 164 residues long: MATFLGNPVTFTGSQLQVGEIAHDFSLITPALEKKSLADFAGKKKVLSIIPSIDTGICSMQTRHFNKTLSDLEDTVVLTVSVDLPFAQGKWCAAEGLDNAIMLSDYYDHSFGKAYGLLINEWHLLARAVLVLDADNKITYVEYLDNINSEPNYDAAIEAVKVLG.

Residues 16–162 form the Thioredoxin domain; it reads LQVGEIAHDF…YDAAIEAVKV (147 aa). Cys58 acts as the Cysteine sulfenic acid (-SOH) intermediate in catalysis. Cys58 and Cys92 are oxidised to a cystine.

It belongs to the peroxiredoxin family. Tpx subfamily. Homodimer.

The catalysed reaction is a hydroperoxide + [thioredoxin]-dithiol = an alcohol + [thioredoxin]-disulfide + H2O. In terms of biological role, thiol-specific peroxidase that catalyzes the reduction of hydrogen peroxide and organic hydroperoxides to water and alcohols, respectively. Plays a role in cell protection against oxidative stress by detoxifying peroxides. The sequence is that of Thiol peroxidase from Streptococcus parasanguinis.